A 363-amino-acid polypeptide reads, in one-letter code: Ribonuclease D (363 aa).

One can recognise a 3'-5' exonuclease domain in the interval 5-168; the sequence is ITHPSELTDR…AIHDELTRRL (164 aa). The HRDC domain occupies 208-288; it reads EPAAQRRLLR…NTPLPDEEHA (81 aa).

This sequence belongs to the RNase D family. A divalent metal cation is required as a cofactor.

The protein localises to the cytoplasm. The enzyme catalyses Exonucleolytic cleavage that removes extra residues from the 3'-terminus of tRNA to produce 5'-mononucleotides.. Functionally, exonuclease involved in the 3' processing of various precursor tRNAs. Initiates hydrolysis at the 3'-terminus of an RNA molecule and releases 5'-mononucleotides. The polypeptide is Ribonuclease D (Xanthomonas oryzae pv. oryzae (strain KACC10331 / KXO85)).